Consider the following 79-residue polypeptide: Pigment-dispersing hormone type 1 (79 aa).

A signal peptide spans 1–22 (MRSAVVVALLVMVAMSLQLTAA). Position 76 is an alanine amide (Ala76).

Belongs to the arthropod PDH family. As to expression, eyestalk.

It localises to the secreted. In terms of biological role, the pigment-dispersing hormone causes the migration of the distal retinal pigment into the proximal end of the pigment chromatophore cells and thus decreases the amount of light entering the retinulas. May also function as a neurotransmitter and/or neuromodulator. In Penaeus vannamei (Whiteleg shrimp), this protein is Pigment-dispersing hormone type 1 (PDH1).